Here is a 111-residue protein sequence, read N- to C-terminus: Putative FAD-linked sulfhydryl oxidase 347L (111 aa).

The ERV/ALR sulfhydryl oxidase domain occupies 2–109 (TDIDPHIWGP…LPESVARKKW (108 aa)). A disulfide bond links Cys49 and Cys52.

Belongs to the IIV-6 347L family. FAD is required as a cofactor.

The catalysed reaction is 2 R'C(R)SH + O2 = R'C(R)S-S(R)CR' + H2O2. Its function is as follows. FAD-dependent sulfhydryl oxidase that catalyzes disulfide bond formation. The sequence is that of Putative FAD-linked sulfhydryl oxidase 347L from Invertebrate iridescent virus 6 (IIV-6).